A 146-amino-acid polypeptide reads, in one-letter code: Large ribosomal subunit protein bL9 (146 aa).

Belongs to the bacterial ribosomal protein bL9 family.

In terms of biological role, binds to the 23S rRNA. This is Large ribosomal subunit protein bL9 from Deinococcus geothermalis (strain DSM 11300 / CIP 105573 / AG-3a).